The primary structure comprises 357 residues: Prostaglandin D2 receptor-like (357 aa).

The Extracellular portion of the chain corresponds to 1-20 (MNESYRCQAATWVERGSSAT). A glycan (N-linked (GlcNAc...) asparagine) is linked at Asn2. The chain crosses the membrane as a helical span at residues 21-41 (MGGVLFSAGLLGNLLALVLLA). At 42 to 57 (RSGLGSCRPGPLHPPP) the chain is on the cytoplasmic side. The helical transmembrane segment at 58–78 (SVFYVLVCGLTVTHLLGKCLI) threads the bilayer. Residues 79 to 106 (SPMVLAAYAQNRSLKELLPASGNQLCEA) are Extracellular-facing. Asn89 carries an N-linked (GlcNAc...) asparagine glycan. Cys104 and Cys182 are oxidised to a cystine. The chain crosses the membrane as a helical span at residues 107–127 (FAFLMSFFGLASTLQLLAMAL). Residues 128–149 (ECWLSLGHPFFYQRHITARRGV) lie on the Cytoplasmic side of the membrane. Residues 150–170 (LVAPVAGAFSLAFCALPFAGF) traverse the membrane as a helical segment. At 171–194 (GKFVQYCPGTWCFIQMIHKKRSFS) the chain is on the extracellular side. Residues 195–215 (VIGFSVLYSSLMALLVLATVV) form a helical membrane-spanning segment. The Cytoplasmic segment spans residues 216-261 (CNLGAMSNLYAMHRRQRHHPRRCSRDRAQSGSDYRHGSPNPLEELD). A helical membrane pass occupies residues 262 to 282 (HFVLLALTTVLFTMCSLPLIY). The Extracellular segment spans residues 283–306 (RAYYGAFKLVDRADGDSEDLQALR). The chain crosses the membrane as a helical span at residues 307–327 (FLSVISIVDPWIFIIFRTSVF). Over 328-357 (RMLFHKAFTRPLIYRNWCSHSWQTNMESTL) the chain is Cytoplasmic.

This sequence belongs to the G-protein coupled receptor 1 family. In terms of tissue distribution, strongly expressed in eye and gastrointestinal tract (GIT), moderately in the brain and oviduct and weakly in the epididymis. In the eye, expressed in the epithelium of the iris and ciliary body and in photoreceptor cells of the retina. In the brain, expressed in leptomeninges, choroid plexus and spinal cord (sensory and motor neurons of the dorsal and ventral horns). In the stomach, expressed in the mucous-secreting goblet cells and the columnar epithelium. Expressed in platelets.

The protein localises to the cell membrane. Its function is as follows. Receptor for prostaglandin D2 (PGD2). The activity of this receptor is mainly mediated by G(s) proteins that stimulate adenylate cyclase, resulting in an elevation of intracellular cAMP. A mobilization of calcium is also observed, but without formation of inositol 1,4,5-trisphosphate. The polypeptide is Prostaglandin D2 receptor-like (Ptgdrl) (Rattus norvegicus (Rat)).